The primary structure comprises 272 residues: uncharacterized protein (272 aa).

Glu163 is a catalytic residue.

This sequence belongs to the glycosyl hydrolase 25 family.

This is an uncharacterized protein from Escherichia coli O157:H7.